A 1108-amino-acid chain; its full sequence is Alpha-mannosidase 2 (1108 aa).

Residues 1 to 9 (MLRIRRRFA) lie on the Cytoplasmic side of the membrane. Residues 10-30 (LVICSGCLLVFLSLYIILNFA) traverse the membrane as a helical; Signal-anchor for type II membrane protein segment. Residues 31–1108 (APAATQIKPN…TAAYVSSHSS (1078 aa)) lie on the Lumenal side of the membrane. The tract at residues 70–92 (AETSNRDDPIRPPLKVARSPRPG) is disordered. 4 residues coordinate Zn(2+): His153, Asp155, Asp267, and His534. Catalysis depends on Asp267, which acts as the Nucleophile.

Belongs to the glycosyl hydrolase 38 family. Homodimer; disulfide-linked. Requires Zn(2+) as cofactor.

It localises to the golgi apparatus membrane. The enzyme catalyses N(4)-{beta-D-GlcNAc-(1-&gt;2)-alpha-D-Man-(1-&gt;3)-[alpha-D-Man-(1-&gt;3)-[alpha-D-Man-(1-&gt;6)]-alpha-D-Man-(1-&gt;6)]-beta-D-Man-(1-&gt;4)-beta-D-GlcNAc-(1-&gt;4)-beta-D-GlcNAc}-L-asparaginyl-[protein] + 2 H2O = 2 alpha-D-mannopyranose + an N(4)-{beta-D-GlcNAc-(1-&gt;2)-alpha-D-Man-(1-&gt;3)-[alpha-D-Man-(1-&gt;6)]-beta-D-Man-(1-&gt;4)-beta-D-GlcNAc-(1-&gt;4)-beta-D-GlcNAc}-L-asparaginyl-[protein]. It functions in the pathway protein modification; protein glycosylation. In terms of biological role, catalyzes the first committed step in the biosynthesis of complex N-glycans. It controls conversion of high mannose to complex N-glycans; the final hydrolytic step in the N-glycan maturation pathway. The polypeptide is Alpha-mannosidase 2 (Drosophila melanogaster (Fruit fly)).